The sequence spans 266 residues: Killer cell lectin-like receptor 8 (266 aa).

Topologically, residues 1 to 44 (MSEQEVTFPTMRFHKSSGLNSQVRLEGTQRSRKAGLRVCSVPWQ) are cytoplasmic. The chain crosses the membrane as a helical; Signal-anchor for type II membrane protein span at residues 45–66 (LIVIALGILCSLRLVIVAVFVT). At 67–266 (KFFQYSQHKQ…CGKKLDKFPD (200 aa)) the chain is on the extracellular side. N-linked (GlcNAc...) asparagine glycans are attached at residues Asn87 and Asn104. A C-type lectin domain is found at 143–261 (GVKYWFCYGT…PYYCICGKKL (119 aa)). 4 disulfides stabilise this stretch: Cys149/Cys154, Cys167/Cys255, Cys171/Cys257, and Cys236/Cys249.

Homodimer; disulfide-linked. Interacts with the adapter protein TYROBP/DAP12; the interaction leads to natural killer cell activation.

The protein resides in the cell membrane. Its function is as follows. Receptor on natural killer (NK) cells for class I MHC. In Mus musculus (Mouse), this protein is Killer cell lectin-like receptor 8 (Klra8).